The sequence spans 1029 residues: Error-prone DNA polymerase (1029 aa).

It belongs to the DNA polymerase type-C family. DnaE2 subfamily.

It localises to the cytoplasm. It carries out the reaction DNA(n) + a 2'-deoxyribonucleoside 5'-triphosphate = DNA(n+1) + diphosphate. Functionally, DNA polymerase involved in damage-induced mutagenesis and translesion synthesis (TLS). It is not the major replicative DNA polymerase. The sequence is that of Error-prone DNA polymerase from Saccharophagus degradans (strain 2-40 / ATCC 43961 / DSM 17024).